The following is a 312-amino-acid chain: Transcription factor Ouib (312 aa).

Residues Ile-4 to Ile-79 enclose the ZAD domain. Cys-6, Cys-9, Cys-52, and Cys-55 together coordinate Zn(2+). 5 C2H2-type zinc fingers span residues Tyr-167–His-189, Phe-195–His-217, Phe-223–His-245, Tyr-251–His-273, and Phe-279–His-303.

Expressed predominantly in the prothoracic gland during embryonic and larval development.

The protein resides in the nucleus. Transcription factor required for ecdysteroid production in the prothoracic gland by activating transcription of the ecdysteroid biosynthesis gene spok. Binds to the 5'-AGCTTTATTATTTAG-3' DNA sequence in the spok enhancer region. In Drosophila melanogaster (Fruit fly), this protein is Transcription factor Ouib.